We begin with the raw amino-acid sequence, 1827 residues long: Sucrase-isomaltase, intestinal (1827 aa).

Over 2–12 (ARKKFSGLEIS) the chain is Cytoplasmic. A Phosphoserine; by PKA modification is found at Ser7. The chain crosses the membrane as a helical; Signal-anchor for type II membrane protein span at residues 13–32 (LIVLFVIVTIIAIALIVVLA). At 33 to 1827 (TKTPAVDEIS…LEEPIEINWS (1795 aa)) the chain is on the lumenal side. Residues 40-61 (EISDSTSTPATTRVTTNPSDSG) are disordered. A compositionally biased stretch (low complexity) spans 45–55 (TSTPATTRVTT). Positions 61–110 (GKCPNVLNDPVNVRINCIPEQFPTEGICAQRGCCWRPWNDSLIPWCFFVD) constitute a P-type 1 domain. Disulfide bonds link Cys63/Cys94, Cys77/Cys93, and Cys88/Cys106. N-linked (GlcNAc...) asparagine glycosylation is present at Asn99. The segment at 110-1007 (DNHGYNVQDM…DLQLNTANAR (898 aa)) is isomaltase. Sulfotyrosine is present on residues Tyr237 and Tyr239. Residues Asp264 and Asp388 each contribute to the substrate site. A sulfotyrosine mark is found at Tyr391 and Tyr400. Asn437 and Asn455 each carry an N-linked (GlcNAc...) asparagine glycan. Asp505 acts as the Nucleophile; for isomaltase activity in catalysis. A disulfide bridge links Cys520 with Cys545. Position 588 (Arg588) interacts with substrate. Asp604 acts as the For isomaltase activity in catalysis. A disulfide bridge links Cys635 with Cys646. His662 provides a ligand contact to substrate. A sulfotyrosine mark is found at Tyr667, Tyr763, and Tyr765. 4 N-linked (GlcNAc...) asparagine glycosylation sites follow: Asn823, Asn855, Asn904, and Asn926. The 47-residue stretch at 932 to 978 (NQIFSENERFNCYPDADLATEQKCTQRGCVWRTGSSLSKAPECYFPR) folds into the P-type 2 domain. The segment at 1008 to 1827 (IKLPSDPIST…LEEPIEINWS (820 aa)) is sucrase. Asn1235, Asn1303, Asn1340, and Asn1354 each carry an N-linked (GlcNAc...) asparagine glycan. The active-site Nucleophile; for sucrase activity is the Asp1394. Glu1397 functions as the For sucrase activity in the catalytic mechanism. N-linked (GlcNAc...) asparagine glycosylation is present at Asn1403. Asp1500 serves as the catalytic Proton donor; for isomaltase activity. Residues Asn1535, Asn1572, Asn1675, Asn1748, Asn1763, and Asn1815 are each glycosylated (N-linked (GlcNAc...) asparagine).

The protein belongs to the glycosyl hydrolase 31 family. In terms of assembly, the resulting sucrase and isomaltase subunits stay associated with one another in a complex by non-covalent linkages. The precursor is proteolytically cleaved when exposed to pancreatic proteases in the intestinal lumen. In terms of processing, sulfated. As to expression, expressed in the poorly differentiated crypt cells of the small intestine as well as in the mature villous cells. Expressed at very low levels in the colon.

It is found in the apical cell membrane. It carries out the reaction Hydrolysis of sucrose and maltose by an alpha-D-glucosidase-type action.. The catalysed reaction is Hydrolysis of (1-&gt;6)-alpha-D-glucosidic linkages in some oligosaccharides produced from starch and glycogen by alpha-amylase, and in isomaltose.. Its function is as follows. Plays an important role in the final stage of carbohydrate digestion. Isomaltase activity is specific for both alpha-1,4- and alpha-1,6-oligosaccharides. The chain is Sucrase-isomaltase, intestinal (SI) from Homo sapiens (Human).